The sequence spans 549 residues: Thermosome subunit alpha (549 aa).

The interval 529–549 (EGRQGAECPPNGCMGGMDMRM) is disordered.

It belongs to the TCP-1 chaperonin family. In terms of assembly, forms a Heterooligomeric complex of two stacked eight-membered rings.

Functionally, molecular chaperone; binds unfolded polypeptides in vitro, and has a weak ATPase activity. This chain is Thermosome subunit alpha (thsA), found in Thermococcus sp. (strain KS-8).